The following is a 906-amino-acid chain: Protein translocase subunit SecA (906 aa).

Residues Q87, 105–109, and D507 contribute to the ATP site; that span reads GEGKT. Zn(2+)-binding residues include C890, C892, C901, and H902.

This sequence belongs to the SecA family. In terms of assembly, monomer and homodimer. Part of the essential Sec protein translocation apparatus which comprises SecA, SecYEG and auxiliary proteins SecDF-YajC and YidC. Requires Zn(2+) as cofactor.

It is found in the cell inner membrane. Its subcellular location is the cytoplasm. The enzyme catalyses ATP + H2O + cellular proteinSide 1 = ADP + phosphate + cellular proteinSide 2.. Its function is as follows. Part of the Sec protein translocase complex. Interacts with the SecYEG preprotein conducting channel. Has a central role in coupling the hydrolysis of ATP to the transfer of proteins into and across the cell membrane, serving both as a receptor for the preprotein-SecB complex and as an ATP-driven molecular motor driving the stepwise translocation of polypeptide chains across the membrane. The sequence is that of Protein translocase subunit SecA from Thiobacillus denitrificans (strain ATCC 25259 / T1).